We begin with the raw amino-acid sequence, 301 residues long: Glycine--tRNA ligase alpha subunit (301 aa).

This sequence belongs to the class-II aminoacyl-tRNA synthetase family. As to quaternary structure, tetramer of two alpha and two beta subunits.

It localises to the cytoplasm. The enzyme catalyses tRNA(Gly) + glycine + ATP = glycyl-tRNA(Gly) + AMP + diphosphate. The chain is Glycine--tRNA ligase alpha subunit from Actinobacillus pleuropneumoniae serotype 5b (strain L20).